The primary structure comprises 141 residues: Large ribosomal subunit protein uL11 (141 aa).

It belongs to the universal ribosomal protein uL11 family. As to quaternary structure, part of the ribosomal stalk of the 50S ribosomal subunit. Interacts with L10 and the large rRNA to form the base of the stalk. L10 forms an elongated spine to which L12 dimers bind in a sequential fashion forming a multimeric L10(L12)X complex. Post-translationally, one or more lysine residues are methylated.

Forms part of the ribosomal stalk which helps the ribosome interact with GTP-bound translation factors. The polypeptide is Large ribosomal subunit protein uL11 (Exiguobacterium sibiricum (strain DSM 17290 / CCUG 55495 / CIP 109462 / JCM 13490 / 255-15)).